The following is a 366-amino-acid chain: MAP kinase-activated protein kinase 2 (366 aa).

The Protein kinase domain occupies 30-291 (KVTSQVLGLG…ITEFMNHPWI (262 aa)). Residues 36-44 (LGLGINGKV) and Lys-59 each bind ATP. 105–107 (ECL) contributes to the staurosporine binding site. The active-site Proton acceptor is the Asp-152. Thr-188 is modified (phosphothreonine; by MAPK14). Ser-238 bears the Phosphoserine; by MAPK14 mark. Ser-294 is modified (phosphoserine; by autocatalysis). Residues 294 to 330 (STKVPQTPLHTSRVLKEDKERWEDVKEEMTSALATMR) are autoinhibitory helix. Position 300 is a phosphothreonine; by MAPK14 (Thr-300). Lys-319 participates in a covalent cross-link: Glycyl lysine isopeptide (Lys-Gly) (interchain with G-Cter in SUMO). Residues 322–331 (MTSALATMRV) carry the Nuclear export signal (NES) motif. Positions 332–356 (DYEQIKIKKIEDASNPLLLKRRKKA) are p38 MAPK-binding site. 2 consecutive short sequence motifs (bipartite nuclear localization signal) follow at residues 337–340 (KIKK) and 351–355 (KRRKK).

It belongs to the protein kinase superfamily. CAMK Ser/Thr protein kinase family. As to quaternary structure, heterodimer with p38-alpha/MAPK14; this heterodimer forms a stable complex: molecules are positioned 'face to face' so that the ATP-binding sites of both kinases are at the heterodimer interface. Interacts with PHC2. Interacts with HSF1. Post-translationally, sumoylation inhibits the protein kinase activity. In terms of processing, phosphorylated and activated by MAP kinase p38-alpha/MAPK14 at Thr-188, Ser-238 and Thr-300.

The protein resides in the cytoplasm. It localises to the nucleus. The catalysed reaction is L-seryl-[protein] + ATP = O-phospho-L-seryl-[protein] + ADP + H(+). It carries out the reaction L-threonyl-[protein] + ATP = O-phospho-L-threonyl-[protein] + ADP + H(+). Its activity is regulated as follows. Activated following phosphorylation by p38-alpha/MAPK14 following various stresses. Inhibited following sumoylation. Specifically inhibited by pyrrolopyridine inhibitors. Its function is as follows. Stress-activated serine/threonine-protein kinase involved in cytokine production, endocytosis, reorganization of the cytoskeleton, cell migration, cell cycle control, chromatin remodeling, DNA damage response and transcriptional regulation. Following stress, it is phosphorylated and activated by MAP kinase p38-alpha/MAPK14, leading to phosphorylation of substrates. Phosphorylates serine in the peptide sequence, Hyd-X-R-X(2)-S, where Hyd is a large hydrophobic residue. Phosphorylates ALOX5, CDC25B, CDC25C, CEP131, ELAVL1, HNRNPA0, HSP27/HSPB1, KRT18, KRT20, LIMK1, LSP1, PABPC1, PARN, PDE4A, RCSD1, RPS6KA3, TAB3 and TTP/ZFP36. Phosphorylates HSF1; leading to the interaction with HSP90 proteins and inhibiting HSF1 homotrimerization, DNA-binding and transactivation activities. Mediates phosphorylation of HSP27/HSPB1 in response to stress, leading to dissociation of HSP27/HSPB1 from large small heat-shock protein (sHsps) oligomers and impairment of their chaperone activities and ability to protect against oxidative stress effectively. Involved in inflammatory response by regulating tumor necrosis factor (TNF) and IL6 production post-transcriptionally: acts by phosphorylating AU-rich elements (AREs)-binding proteins ELAVL1, HNRNPA0, PABPC1 and TTP/ZFP36, leading to regulate the stability and translation of TNF and IL6 mRNAs. Phosphorylation of TTP/ZFP36, a major post-transcriptional regulator of TNF, promotes its binding to 14-3-3 proteins and reduces its ARE mRNA affinity leading to inhibition of dependent degradation of ARE-containing transcripts. Phosphorylates CEP131 in response to cellular stress following ultraviolet irradiation which promotes binding of CEP131 to 14-3-3 proteins and inhibits formation of novel centriolar satellites. Also involved in late G2/M checkpoint following DNA damage through a process of post-transcriptional mRNA stabilization: following DNA damage, relocalizes from nucleus to cytoplasm and phosphorylates HNRNPA0 and PARN, leading to stabilization of GADD45A mRNA. Involved in toll-like receptor signaling pathway (TLR) in dendritic cells: required for acute TLR-induced macropinocytosis by phosphorylating and activating RPS6KA3. The protein is MAP kinase-activated protein kinase 2 (MAPKAPK2) of Oryctolagus cuniculus (Rabbit).